Here is a 187-residue protein sequence, read N- to C-terminus: UPF0340 protein SMU_87 (187 aa).

Belongs to the UPF0340 family.

In Streptococcus mutans serotype c (strain ATCC 700610 / UA159), this protein is UPF0340 protein SMU_87.